A 535-amino-acid polypeptide reads, in one-letter code: Cytochrome P450 monooxygenase BOA7 (535 aa).

A helical transmembrane segment spans residues serine 20–tryptophan 37. N-linked (GlcNAc...) asparagine glycosylation is found at asparagine 65, asparagine 148, asparagine 180, and asparagine 420. Cysteine 478 contacts heme.

Belongs to the cytochrome P450 family. Heme serves as cofactor.

The protein localises to the membrane. The protein operates within polyketide biosynthesis. In terms of biological role, cytochrome P450 monooxygenase; part of the gene cluster B that mediates the biosynthesis of botcinic acid and its botcinin derivatives, acetate-derived polyketides that contribute to virulence when combined with the sesquiterpene botrydial. Botcinic acid and its derivatives have been shown to induce chlorosis and necrosis during host plant infection, but also have antifungal activities. Two polyketide synthases, BOA6 and BOA9, are involved in the biosynthesis of botcinins. BOA6 mediates the formation of the per-methylated tetraketide core by condensation of four units of malonyl-CoA with one unit of acetyl-CoA, which would be methylated in activated methylene groups to yield a bicyclic acid intermediate that could then either be converted to botrylactone derivatives or lose the starter acetate unit through a retro-Claisen type C-C bond cleavage to yield botcinin derivatives. The second polyketide synthase, BOA9, is probably required for the biosynthesis of the tetraketide side chain of botcinins. The methyltransferase (MT) domain within BOA6 is probably responsible for the incorporation of four methyl groups. The trans-enoyl reductase BOA5 might take over the enoyl reductase function of BOA6 that misses an ER domain. The monooxygenases BOA2, BOA3 and BOA4 might be involved in further hydroxylations at C4, C5 and C8, whereas BOA7, close to BOA9, could potentially be involved in the hydroxylation at C4 in the side chain of botcinins. In Botryotinia fuckeliana (strain B05.10) (Noble rot fungus), this protein is Cytochrome P450 monooxygenase BOA7.